Here is a 407-residue protein sequence, read N- to C-terminus: MDLLNTLVDKGLRRETPTREEALAVLVTSDDDLLDVVAAAGKVRRHWFGRRVKLNYLVNLKSGLCPEDCSYCSQRLGSKAEILKYTWLKPDQASAAAAAGVSGGAKRVCLVASGRGPTDRDVDRVSDTIKAIKEQNESVEVCACLGLLSDGQAERLREAGADAYNHNLNTSESTYGDITTTHTYADRVDTVNKAHAAGLSACSGLIAGMGESDEDLVDVVFSLRELDPDSVPVNFLIPMEGTPLAKEWHLTPQRCLRILAMTRFVCPDVEVRIAGGREVHLRTMQPLALHLANSIFLGDYLTSEGQAGHADLELIADAGFEVEGAGEVTLPEHRASVRGGGCGSHEGGGACGSHDGADGDAGCGSHAGGGVCAPAPAATTPRPAEEPRTDLVAVRRRGAGTDLAPNA.

A Radical SAM core domain is found at 47 to 277 (WFGRRVKLNY…DVEVRIAGGR (231 aa)). Cysteine 65, cysteine 69, and cysteine 72 together coordinate [4Fe-4S] cluster. Residues cysteine 109, cysteine 142, cysteine 202, and arginine 272 each contribute to the [2Fe-2S] cluster site. Residues 368-407 (GGGVCAPAPAATTPRPAEEPRTDLVAVRRRGAGTDLAPNA) are disordered. Positions 373 to 382 (APAPAATTPR) are enriched in low complexity.

It belongs to the radical SAM superfamily. Biotin synthase family. Homodimer. Requires [4Fe-4S] cluster as cofactor. It depends on [2Fe-2S] cluster as a cofactor.

The enzyme catalyses (4R,5S)-dethiobiotin + (sulfur carrier)-SH + 2 reduced [2Fe-2S]-[ferredoxin] + 2 S-adenosyl-L-methionine = (sulfur carrier)-H + biotin + 2 5'-deoxyadenosine + 2 L-methionine + 2 oxidized [2Fe-2S]-[ferredoxin]. It participates in cofactor biosynthesis; biotin biosynthesis; biotin from 7,8-diaminononanoate: step 2/2. In terms of biological role, catalyzes the conversion of dethiobiotin (DTB) to biotin by the insertion of a sulfur atom into dethiobiotin via a radical-based mechanism. The polypeptide is Biotin synthase (Streptomyces coelicolor (strain ATCC BAA-471 / A3(2) / M145)).